The sequence spans 383 residues: Acetylornithine deacetylase (383 aa).

Zn(2+) is bound at residue His80. The active site involves Asp82. Asp112 contacts Zn(2+). The active site involves Glu144. The Zn(2+) site is built by Glu145, Glu169, and His355.

The protein belongs to the peptidase M20A family. ArgE subfamily. Homodimer. Requires Zn(2+) as cofactor. Co(2+) is required as a cofactor. The cofactor is glutathione.

It localises to the cytoplasm. The catalysed reaction is N(2)-acetyl-L-ornithine + H2O = L-ornithine + acetate. The protein operates within amino-acid biosynthesis; L-arginine biosynthesis; L-ornithine from N(2)-acetyl-L-ornithine (linear): step 1/1. Functionally, catalyzes the hydrolysis of the amide bond of N(2)-acetylated L-amino acids. Cleaves the acetyl group from N-acetyl-L-ornithine to form L-ornithine, an intermediate in L-arginine biosynthesis pathway, and a branchpoint in the synthesis of polyamines. This is Acetylornithine deacetylase from Shigella boydii serotype 4 (strain Sb227).